Reading from the N-terminus, the 495-residue chain is MKSQLLSLAVAVTTISQGVVGQEPFGWPFKPMVTQDDLQNKIKLKDIMAGVEKLQSFSDAHPEKNRVFGGNGHKDTVEWIYNEIKATGYYDVKKQEQVHLWSHAEAALNANGKDLKASAMSYSPPASKIMAELVVAKNNGCNATDYPANTQGKIVLVERGVCSFGEKSAQAGDAKAAGAIVYNNVPGSLAGTLGGLDKRHVPTAGLSQEDGKNLATLVASGKIDVTMNVISLFENRTTWNVIAETKGGDHNNVIMLGAHSDSVDAGPGINDNGSGSIGIMTVAKALTNFKLNNAVRFAWWTAEEFGLLGSTFYVNSLDDRELHKVKLYLNFDMIGSPNFANQIYDGDGSAYNMTGPAGSAEIEYLFEKFFDDQGIPHQPTAFTGRSDYSAFIKRNVPAGGLFTGAEVVKTPEQVKLFGGEAGVAYDKNYHRKGDTVANINKGAIFLNTRAIAYAIAEYARSLKGFPTRPKTGKRDVNPQYSKMPGGGCGHHTVFM.

The first 21 residues, 1–21 (MKSQLLSLAVAVTTISQGVVG), serve as a signal peptide directing secretion. The PA domain occupies 124–218 (PPASKIMAEL…EDGKNLATLV (95 aa)). Residues Asn142 and Asn235 are each glycosylated (N-linked (GlcNAc...) asparagine). Zn(2+)-binding residues include His259 and Asp271. Asn272 carries N-linked (GlcNAc...) asparagine glycosylation. Glu303 (proton acceptor) is an active-site residue. Residues Glu304 and Asp332 each contribute to the Zn(2+) site. N-linked (GlcNAc...) asparagine glycosylation is present at Asn352. His430 provides a ligand contact to Zn(2+).

It belongs to the peptidase M28 family. M28A subfamily. Monomer. Zn(2+) is required as a cofactor.

The protein resides in the secreted. Its activity is regulated as follows. Activity is inhibited by EDTA, o-phenanthroline, bestatin and amastatin. In terms of biological role, extracellular aminopeptidase that releases a wide variety of amino acids from natural peptides and contributes to pathogenicity. The chain is Leucine aminopeptidase 2 (LAP2) from Trichophyton rubrum (Athlete's foot fungus).